We begin with the raw amino-acid sequence, 402 residues long: Putative cytochrome P450 123 (402 aa).

Cysteine 350 serves as a coordination point for heme.

The protein belongs to the cytochrome P450 family. Heme is required as a cofactor.

The sequence is that of Putative cytochrome P450 123 (cyp123) from Mycobacterium bovis (strain ATCC BAA-935 / AF2122/97).